The chain runs to 202 residues: MPIGVPKVPFRSPGEEDAVWVDIYNRLHRERLLFLGQGVDSEISNQLVGLMVYLSMEDNTRDLYLFINSPGGWVIPGIAIYDAMQIVPPDVHTICMGLAASMGSFILVGGEFTKRLAFPHARVMIHQPASSFYEAQAGEFILEAEELLKLREILTRVYVQRTGKPLWVVSEDMERDVFMSATEAQAHGIVDLVAVENSADFV.

The active-site Nucleophile is serine 101. Histidine 126 is an active-site residue.

It belongs to the peptidase S14 family. Component of the chloroplastic Clp protease core complex.

The protein localises to the plastid. Its subcellular location is the chloroplast stroma. The catalysed reaction is Hydrolysis of proteins to small peptides in the presence of ATP and magnesium. alpha-casein is the usual test substrate. In the absence of ATP, only oligopeptides shorter than five residues are hydrolyzed (such as succinyl-Leu-Tyr-|-NHMec, and Leu-Tyr-Leu-|-Tyr-Trp, in which cleavage of the -Tyr-|-Leu- and -Tyr-|-Trp bonds also occurs).. Its function is as follows. Cleaves peptides in various proteins in a process that requires ATP hydrolysis. Has a chymotrypsin-like activity. Plays a major role in the degradation of misfolded proteins. The protein is ATP-dependent Clp protease proteolytic subunit of Nuphar advena (Common spatterdock).